The chain runs to 128 residues: DNA-directed RNA polymerase subunit omega (128 aa).

Residues 87–106 (ARSSQAAPKSAPGQEIGKSF) are disordered.

The protein belongs to the RNA polymerase subunit omega family. In terms of assembly, the RNAP catalytic core consists of 2 alpha, 1 beta, 1 beta' and 1 omega subunit. When a sigma factor is associated with the core the holoenzyme is formed, which can initiate transcription.

It carries out the reaction RNA(n) + a ribonucleoside 5'-triphosphate = RNA(n+1) + diphosphate. Functionally, promotes RNA polymerase assembly. Latches the N- and C-terminal regions of the beta' subunit thereby facilitating its interaction with the beta and alpha subunits. This is DNA-directed RNA polymerase subunit omega from Anaplasma marginale (strain St. Maries).